The sequence spans 285 residues: Inositol oxygenase (285 aa).

Position 29 (Arg29) interacts with substrate. Position 33 is a phosphoserine (Ser33). Substrate is bound at residue 85-87 (DES). Positions 98, 123, and 124 each coordinate Fe cation. Residues Lys127 and 141–142 (GD) contribute to the substrate site. Positions 194, 220, and 253 each coordinate Fe cation. Substrate is bound at residue 220–221 (HS).

Belongs to the myo-inositol oxygenase family. Requires Fe cation as cofactor.

It localises to the cytoplasm. The enzyme catalyses myo-inositol + O2 = D-glucuronate + H2O + H(+). The protein operates within polyol metabolism; myo-inositol degradation into D-glucuronate; D-glucuronate from myo-inositol: step 1/1. This is Inositol oxygenase (MIOX) from Pongo abelii (Sumatran orangutan).